A 76-amino-acid polypeptide reads, in one-letter code: Small ribosomal subunit protein bS21A (76 aa).

Over residues 35–52 (HYEKPSEKRAREKAEAVR) the composition is skewed to basic and acidic residues. Residues 35 to 76 (HYEKPSEKRAREKAEAVRRARKLARKRAQREGLVSGRPAAAR) are disordered. The span at 53-62 (RARKLARKRA) shows a compositional bias: basic residues.

Belongs to the bacterial ribosomal protein bS21 family.

In Chelativorans sp. (strain BNC1), this protein is Small ribosomal subunit protein bS21A.